A 541-amino-acid polypeptide reads, in one-letter code: Ascorbate transporter, chloroplastic (541 aa).

Residues 1-28 (MALGGLISNRNFGSFIGSGNGCQRLGKS) constitute a chloroplast transit peptide. Helical transmembrane passes span 133–155 (VIVL…MSIA), 170–190 (VGLI…LGGI), 199–219 (VVLG…PIAA), 221–241 (LGLP…GVAM), 263–283 (LVYS…PMLI), 286–306 (FGWP…FLLW), 352–372 (VWAL…LLTW), 390–410 (LLCV…GWIA), 430–450 (IGFL…TPAM), 481–501 (AGVL…FGTA), and 515–535 (VFKV…LFAT).

This sequence belongs to the major facilitator superfamily. Sodium/anion cotransporter (TC 2.A.1.14) family. Expressed in stems, developing siliques, leaf mesophyll cells and sepals of mature flowers. Not detected in roots. Detected in palisade tissue rather than spongy tissue from the leaves.

The protein resides in the plastid. It is found in the chloroplast inner membrane. With respect to regulation, insensitive to dehydroascorbate, p-isoascorbate, inorganic phosphate, glutamate, ATP, p-aminohippuric acid or tetraethylammonium. In terms of biological role, inorganic phosphate and probable anion transporter. Ascorbate transporter bridging the chloroplast envelope. Transports ascorbate from the cytosol into the chloroplast. Requires chloride ions and the presence of an electrochemical potential across the membrane for activity. In Arabidopsis thaliana (Mouse-ear cress), this protein is Ascorbate transporter, chloroplastic (PHT4;4).